The chain runs to 350 residues: L-serine dehydratase (350 aa).

N6-(pyridoxal phosphate)lysine is present on Lys-62.

Belongs to the serine/threonine dehydratase family. Requires pyridoxal 5'-phosphate as cofactor.

The protein resides in the cytoplasm. The catalysed reaction is L-serine = pyruvate + NH4(+). Its pathway is carbohydrate biosynthesis; gluconeogenesis. In Dictyostelium discoideum (Social amoeba), this protein is L-serine dehydratase (sds).